Here is a 266-residue protein sequence, read N- to C-terminus: Protein crossbronx-like (266 aa).

In terms of domain architecture, UBC core spans 15-178 (KQGYHILAEY…VQEQAILSRN (164 aa)). Residues 226-266 (SEYLGHIDSSRQMDEEETNQLEKLHRGRIPEPQREEAEVSL) are disordered. A compositionally biased stretch (basic and acidic residues) spans 245–266 (QLEKLHRGRIPEPQREEAEVSL).

Belongs to the ubiquitin-conjugating enzyme family. FTS subfamily.

In Drosophila sechellia (Fruit fly), this protein is Protein crossbronx-like.